Here is a 296-residue protein sequence, read N- to C-terminus: Phosphatidylcholine:diacylglycerol cholinephosphotransferase 2 (296 aa).

Helical transmembrane passes span 83-103, 136-156, 165-182, 198-218, and 250-270; these read HWIP…EYTF, VLAA…GCTW, TIAA…GYST, PVGN…SMIA, and GHYT…DSLA. Residues H211, H251, and D255 contribute to the active site.

The protein belongs to the phosphatidylcholine:diacylglycerol cholinephosphotransferase family.

It localises to the membrane. Functions as a phosphatidylcholine:diacylglycerol cholinephosphotransferase that catalyzes the transfer of the phosphocholine headgroup from phosphatidylcholine (PC) to diacylglycerol, a major reaction for the transfer of 18:1 into phosphatidylcholine for desaturation and also for the reverse transfer of 18:2 and 18:3 into the triacylglycerols synthesis pathway. This is Phosphatidylcholine:diacylglycerol cholinephosphotransferase 2 from Arabidopsis thaliana (Mouse-ear cress).